Reading from the N-terminus, the 132-residue chain is Small ribosomal subunit protein uS19 (132 aa).

The protein belongs to the universal ribosomal protein uS19 family.

Its function is as follows. Protein S19 forms a complex with S13 that binds strongly to the 16S ribosomal RNA. The sequence is that of Small ribosomal subunit protein uS19 (rps19) from Pyrococcus abyssi (strain GE5 / Orsay).